Reading from the N-terminus, the 74-residue chain is Exodeoxyribonuclease 7 small subunit (74 aa).

This sequence belongs to the XseB family. In terms of assembly, heterooligomer composed of large and small subunits.

Its subcellular location is the cytoplasm. It carries out the reaction Exonucleolytic cleavage in either 5'- to 3'- or 3'- to 5'-direction to yield nucleoside 5'-phosphates.. Bidirectionally degrades single-stranded DNA into large acid-insoluble oligonucleotides, which are then degraded further into small acid-soluble oligonucleotides. This Symbiobacterium thermophilum (strain DSM 24528 / JCM 14929 / IAM 14863 / T) protein is Exodeoxyribonuclease 7 small subunit.